Reading from the N-terminus, the 601-residue chain is RNA polymerase II C-terminal domain phosphatase-like 5 (601 aa).

The tract at residues 1 to 20 (MFVAKNLSPERESKRQKKEP) is disordered. Basic and acidic residues predominate over residues 8–20 (SPERESKRQKKEP). FCP1 homology domains lie at 84 to 259 (LNMK…TDES) and 381 to 553 (LNEK…DESE).

Expressed in roots, seedlings, hypocotyls, cotyledons, leaves, siliques and flowers.

The protein resides in the nucleus. The catalysed reaction is O-phospho-L-seryl-[protein] + H2O = L-seryl-[protein] + phosphate. It carries out the reaction O-phospho-L-threonyl-[protein] + H2O = L-threonyl-[protein] + phosphate. In terms of biological role, mediates the dephosphorylation of 'Ser-2' of the heptad repeats YSPTSPS in the C-terminal domain of the largest RNA polymerase II subunit (RPB1). This promotes the activity of RNA polymerase II. Positively regulates abscisic acid (ABA) and drought responses, including the regulation of specific genes expression. This Arabidopsis thaliana (Mouse-ear cress) protein is RNA polymerase II C-terminal domain phosphatase-like 5.